The primary structure comprises 218 residues: Pyridoxine/pyridoxamine 5'-phosphate oxidase (218 aa).

FMN contacts are provided by residues 66–71 (RVVLLK), Arg87, Lys88, and Gln110. Lys71 provides a ligand contact to substrate. Residues Tyr128, Arg132, and Ser136 each coordinate substrate. FMN-binding positions include 145-146 (QS) and Trp190. 196 to 198 (RLH) contacts substrate. Arg200 provides a ligand contact to FMN.

The protein belongs to the pyridoxamine 5'-phosphate oxidase family. Homodimer. Requires FMN as cofactor.

It carries out the reaction pyridoxamine 5'-phosphate + O2 + H2O = pyridoxal 5'-phosphate + H2O2 + NH4(+). It catalyses the reaction pyridoxine 5'-phosphate + O2 = pyridoxal 5'-phosphate + H2O2. It participates in cofactor metabolism; pyridoxal 5'-phosphate salvage; pyridoxal 5'-phosphate from pyridoxamine 5'-phosphate: step 1/1. The protein operates within cofactor metabolism; pyridoxal 5'-phosphate salvage; pyridoxal 5'-phosphate from pyridoxine 5'-phosphate: step 1/1. Its function is as follows. Catalyzes the oxidation of either pyridoxine 5'-phosphate (PNP) or pyridoxamine 5'-phosphate (PMP) into pyridoxal 5'-phosphate (PLP). The protein is Pyridoxine/pyridoxamine 5'-phosphate oxidase of Anaplasma marginale (strain St. Maries).